An 852-amino-acid polypeptide reads, in one-letter code: Tiger protein I3 (852 aa).

Positions 1-18 (MKILLFFILFYLFSFSIS) are cleaved as a signal peptide. Over 19–830 (YDEVIPLGYE…DVHQYSDARN (812 aa)) the chain is Extracellular. Residues asparagine 31, asparagine 47, asparagine 67, asparagine 97, asparagine 129, asparagine 201, asparagine 215, asparagine 228, asparagine 260, asparagine 323, asparagine 352, asparagine 356, asparagine 404, asparagine 441, asparagine 476, asparagine 483, asparagine 501, asparagine 512, asparagine 574, asparagine 592, asparagine 635, asparagine 658, asparagine 661, asparagine 679, asparagine 680, asparagine 723, asparagine 757, asparagine 761, asparagine 773, asparagine 785, and asparagine 800 are each glycosylated (N-linked (GlcNAc...) asparagine). An IPT/TIG domain is found at 290 to 367 (IPSIVNSIPK…SSPIAVSIND (78 aa)). A helical transmembrane segment spans residues 831–851 (IFQNLLLSILIIIIISLFISN). Isoleucine 852 is a topological domain (cytoplasmic).

The protein localises to the membrane. The sequence is that of Tiger protein I3 (tgrI3) from Dictyostelium discoideum (Social amoeba).